Here is a 245-residue protein sequence, read N- to C-terminus: Probable phosphatase YcdX (245 aa).

Residues His7, His9, His15, His40, Glu73, His101, His131, Asp192, and His194 each contribute to the Zn(2+) site.

The protein belongs to the PHP family. In terms of assembly, homotrimer. The cofactor is Zn(2+).

The polypeptide is Probable phosphatase YcdX (Salmonella heidelberg (strain SL476)).